A 533-amino-acid polypeptide reads, in one-letter code: MSSLVSEIARRRTFAIISHPDAGKTTLTEKLLWFGGAIQVAGEVRARKADRHATSDWMELEKQRGISVTSSVMQFPYRREAADGKAEENIVNLLDTPGHEDFSEDTYRTLTAVDSAVMVIDSVNGVEAQTIKLLNVCRLRATPILTFINKLDREGRSPIELLDEIEDVLQIQCAPMTWPIGMGKAFRGVYHLIDDKVQLFDPHGDKGTAAILDGLDNPELDRILGSQADELRLEIELVRGASHTFDKEAFLAGKQTPVYFGSAINNFGVQSLLDALCQLSPPPLARNTESRVVEPQEGKFTGFVFKIQANMDPRHRDRIAFVRVCSGRFERGMKLLHVSQAKTVAINNAITFMAQDRNTTEEAYAGDIIGVPNHGTIRLGDVFTEGEPLKFTGIPSFAPEFFRRARLNNPLKVKQLQKGLQQLAEEGATQMFRPLASNELVLGAVGILQFDVVAHRLEHEYGVDAIFESHECATARWLKGAPAEIEKLIAKAGHNVALDGAGDHVYLAPSMVNLRLTQEKFPDVQFLETREIV.

Positions A9–L284 constitute a tr-type G domain. Residues S18–T25, D95–H99, and N149–D152 each bind GTP.

This sequence belongs to the TRAFAC class translation factor GTPase superfamily. Classic translation factor GTPase family. PrfC subfamily.

The protein resides in the cytoplasm. In terms of biological role, increases the formation of ribosomal termination complexes and stimulates activities of RF-1 and RF-2. It binds guanine nucleotides and has strong preference for UGA stop codons. It may interact directly with the ribosome. The stimulation of RF-1 and RF-2 is significantly reduced by GTP and GDP, but not by GMP. The sequence is that of Peptide chain release factor 3 from Cupriavidus pinatubonensis (strain JMP 134 / LMG 1197) (Cupriavidus necator (strain JMP 134)).